The following is a 303-amino-acid chain: N-acetyl-D-glucosamine kinase (303 aa).

ATP-binding positions include 4–11 (GFDVGGTK) and 133–140 (GFGGGLIY). Zn(2+) contacts are provided by His-157, Cys-177, Cys-179, and Cys-184.

It belongs to the ROK (NagC/XylR) family. NagK subfamily.

It carries out the reaction N-acetyl-D-glucosamine + ATP = N-acetyl-D-glucosamine 6-phosphate + ADP + H(+). Its pathway is cell wall biogenesis; peptidoglycan recycling. Functionally, catalyzes the phosphorylation of N-acetyl-D-glucosamine (GlcNAc) derived from cell-wall degradation, yielding GlcNAc-6-P. The chain is N-acetyl-D-glucosamine kinase from Vibrio vulnificus (strain CMCP6).